A 294-amino-acid polypeptide reads, in one-letter code: Elongation factor Ts, mitochondrial 2 (294 aa).

It belongs to the EF-Ts family.

The protein localises to the mitochondrion. Its function is as follows. Associates with the EF-Tu.GDP complex and induces the exchange of GDP to GTP. It remains bound to the aminoacyl-tRNA.EF-Tu.GTP complex up to the GTP hydrolysis stage on the ribosome. This is Elongation factor Ts, mitochondrial 2 from Paramecium tetraurelia.